Consider the following 135-residue polypeptide: UPF0299 membrane protein YPK_2559 (135 aa).

Helical transmembrane passes span 30-50 (LLLP…FVLL), 66-86 (LLIR…MQYY), and 93-113 (FGPI…VVAY).

The protein belongs to the UPF0299 family.

It is found in the cell inner membrane. This chain is UPF0299 membrane protein YPK_2559, found in Yersinia pseudotuberculosis serotype O:3 (strain YPIII).